We begin with the raw amino-acid sequence, 512 residues long: Maturase K (512 aa).

It belongs to the intron maturase 2 family. MatK subfamily.

Its subcellular location is the plastid. It localises to the chloroplast. Usually encoded in the trnK tRNA gene intron. Probably assists in splicing its own and other chloroplast group II introns. The sequence is that of Maturase K from Lemna gibba (Swollen duckweed).